The primary structure comprises 284 residues: RAD52 motif-containing protein 1 (284 aa).

The necessary for nuclear localization and for nucleolar accumulation in response to heat shock stretch occupies residues 1–92; sequence MAELVPFAVP…KQLFQKSPVK (92 aa). An RRM domain is found at 15–98; that stretch reads KTLLVWELSS…SPVKVRLGTR (84 aa). Residues 90–133 are necessary for nuclear and nucleolar localization; that stretch reads PVKVRLGTRHKAVQHQALALNSSRCQELANYYFGFNGWSKRIIK.

Homodimer.

The protein localises to the nucleus. The protein resides in the cytoplasm. Its subcellular location is the nucleolus. It is found in the cajal body. It localises to the PML body. May confer resistance to the antitumor agent cisplatin. Binds to DNA and RNA. The polypeptide is RAD52 motif-containing protein 1 (RDM1) (Macaca fascicularis (Crab-eating macaque)).